The following is a 519-amino-acid chain: MQGGQRPHLLLLLLAVCLGAQSRNQEERLLADLMRNYDPHLRPAERDSDVVNVSLKLTLTNLISLNEREEALTTNVWIEMQWCDYRLRWDPKDYEGLWILRVPSTMVWRPDIVLENNVDGVFEVALYCNVLVSPDGCIYWLPPAIFRSSCSISVTYFPFDWQNCSLIFQSQTYSTSEINLQLSQEDGQAIEWIFIDPEAFTENGEWAIRHRPAKMLLDSVAPAEEAGHQKVVFYLLIQRKPLFYVINIIAPCVLISSVAILIYFLPAKAGGQKCTVATNVLLAQTVFLFLVAKKVPETSQAVPLISKYLTFLMVVTILIVVNSVVVLNVSLRSPHTHSMARGVRKLFLRLLPQLLRMHVRPLAPAAVQDARFRLQNGSSSGWPIMAREEGDLCLPRSELLFRQRQRNGLVQAVLEKLENGPEVRQSQEFCGSLKQASPAIQACVDACNLMARARRQQSHFDSGNEEWLLVGRVLDRVCFLAMLSLFICGTAGIFLMAHYNQVPDLPFPGDPRPYLPLPD.

A signal peptide spans 1-22; that stretch reads MQGGQRPHLLLLLLAVCLGAQS. The Extracellular segment spans residues 23–240; it reads RNQEERLLAD…VVFYLLIQRK (218 aa). Residues Asn52 and Asn163 are each glycosylated (N-linked (GlcNAc...) asparagine). An intrachain disulfide couples Cys150 to Cys164. A run of 3 helical transmembrane segments spans residues 241-265, 274-292, and 308-329; these read PLFY…IYFL, CTVA…FLVA, and YLTF…VLNV. Residues 330 to 476 are Cytoplasmic-facing; it reads SLRSPHTHSM…WLLVGRVLDR (147 aa). The helical transmembrane segment at 477 to 497 threads the bilayer; that stretch reads VCFLAMLSLFICGTAGIFLMA.

It belongs to the ligand-gated ion channel (TC 1.A.9) family. Acetylcholine receptor (TC 1.A.9.1) subfamily. Gamma/CHRNG sub-subfamily. In terms of assembly, pentamer of two alpha chains, and one each of the beta, delta, and gamma (in immature muscle) or epsilon (in mature muscle) chains. At least in myotubes of skeletal muscle.

It is found in the postsynaptic cell membrane. The protein resides in the cell membrane. The catalysed reaction is K(+)(in) = K(+)(out). It carries out the reaction Na(+)(in) = Na(+)(out). After binding acetylcholine, the AChR responds by an extensive change in conformation that affects all subunits and leads to opening of an ion-conducting channel across the plasma membrane. In Mus musculus (Mouse), this protein is Acetylcholine receptor subunit gamma (Chrng).